The primary structure comprises 551 residues: Genetic interactor of prohibitins 3, mitochondrial (551 aa).

The N-terminal 24 residues, 1 to 24 (MFVVRRSIVFQQSRRQFSGSIAWL), are a transit peptide targeting the mitochondrion. The 182-residue stretch at 118–299 (LKEVIRSVPN…IYDLPGYSEN (182 aa)) folds into the CP-type G domain.

It belongs to the TRAFAC class YlqF/YawG GTPase family. GEP3 subfamily.

Its subcellular location is the mitochondrion. Functionally, may be involved in the mitochondrial lipid metabolism. The protein is Genetic interactor of prohibitins 3, mitochondrial (GEP3) of Vanderwaltozyma polyspora (strain ATCC 22028 / DSM 70294 / BCRC 21397 / CBS 2163 / NBRC 10782 / NRRL Y-8283 / UCD 57-17) (Kluyveromyces polysporus).